We begin with the raw amino-acid sequence, 506 residues long: Cobyric acid synthase (506 aa).

Residues 260–453 (KVGVAAIYFP…FHGIFNEPAV (194 aa)) enclose the GATase cobBQ-type domain. Cys-341 functions as the Nucleophile in the catalytic mechanism. His-445 is a catalytic residue.

This sequence belongs to the CobB/CobQ family. CobQ subfamily.

Its pathway is cofactor biosynthesis; adenosylcobalamin biosynthesis. Functionally, catalyzes amidations at positions B, D, E, and G on adenosylcobyrinic A,C-diamide. NH(2) groups are provided by glutamine, and one molecule of ATP is hydrogenolyzed for each amidation. The chain is Cobyric acid synthase from Chlorobium chlorochromatii (strain CaD3).